A 100-amino-acid chain; its full sequence is Phosphoribosylformylglycinamidine synthase subunit PurS (100 aa).

The protein belongs to the PurS family. As to quaternary structure, homodimer. Part of the FGAM synthase complex composed of 1 PurL, 1 PurQ and 2 PurS subunits.

The protein localises to the cytoplasm. It catalyses the reaction N(2)-formyl-N(1)-(5-phospho-beta-D-ribosyl)glycinamide + L-glutamine + ATP + H2O = 2-formamido-N(1)-(5-O-phospho-beta-D-ribosyl)acetamidine + L-glutamate + ADP + phosphate + H(+). The protein operates within purine metabolism; IMP biosynthesis via de novo pathway; 5-amino-1-(5-phospho-D-ribosyl)imidazole from N(2)-formyl-N(1)-(5-phospho-D-ribosyl)glycinamide: step 1/2. Part of the phosphoribosylformylglycinamidine synthase complex involved in the purines biosynthetic pathway. Catalyzes the ATP-dependent conversion of formylglycinamide ribonucleotide (FGAR) and glutamine to yield formylglycinamidine ribonucleotide (FGAM) and glutamate. The FGAM synthase complex is composed of three subunits. PurQ produces an ammonia molecule by converting glutamine to glutamate. PurL transfers the ammonia molecule to FGAR to form FGAM in an ATP-dependent manner. PurS interacts with PurQ and PurL and is thought to assist in the transfer of the ammonia molecule from PurQ to PurL. In Synechocystis sp. (strain ATCC 27184 / PCC 6803 / Kazusa), this protein is Phosphoribosylformylglycinamidine synthase subunit PurS.